A 220-amino-acid chain; its full sequence is Avenin-3 (220 aa).

The first 19 residues, 1–19 (MKTFLIFALLAMAATMATA), serve as a signal peptide directing secretion. Q20 carries the post-translational modification Pyrrolidone carboxylic acid. Repeat copies occupy residues 41–48 (QQMLLQQQ) and 49–56 (QQMLLQQQ). Residues 41-56 (QQMLLQQQQQMLLQQQ) form a 2 X 8 AA tandem repeats of Q-Q-M-L-L-Q-Q-Q region. 4 cysteine pairs are disulfide-bonded: C69–C202, C77–C96, C103–C104, and C116–C210. Residues 128-137 (MQQQQFFQPQ) form a 2-1 repeat. Positions 128 to 146 (MQQQQFFQPQMQQQFFQPQ) are 2 X 10 AA tandem repeats of M-Q-Q-Q-Q-F-F-Q-P-Q. Residues 138-146 (MQQQFFQPQ) form a 2-2; approximate repeat.

Belongs to the gliadin/glutenin family. In terms of assembly, monomer.

It is found in the vacuole. Seed storage protein. Serves as a source of nitrogen, carbon, and sulfur for the young developing seedling. The sequence is that of Avenin-3 from Avena sativa (Oat).